Here is a 428-residue protein sequence, read N- to C-terminus: MANIERVIGREVLDSRGNPTVEADVWLDDGSFGRAAVPSGASTGSREAVELRDGGGRYNGKGVRTAVENVNTTIREALQGGSADDQAALDRQLIDLDGSPNKDRLGANAILAVSMAVAQAAARSRGLPLYRHLQQEGSAAQLPAPMMNILNGGEHADNSVDIQEFMIMPIGFDRFSEALRCGAEIFHALKKVLHERGLSTAVGDEGGFAPDLPSNEAALEAIIEAIQRAGYQAGDQVALALDVASSELYRDGRYHLASEGRDFDAAGFADYLAQLVDKYPIVSIEDGMDESDWDGWKVLTERLGGQIQLVGDDLFVTNPQILQQGIDRGIANSILIKLNQIGTVTETLEAIRMADEAGYTSVVSHRSGETEDVAIADLAVATRATQIKTGSLCRSDRVAKYNQLLRIEQELGDDARYVGRDALRPEQG.

Glutamine 163 is a binding site for (2R)-2-phosphoglycerate. Glutamate 205 functions as the Proton donor in the catalytic mechanism. Mg(2+) contacts are provided by aspartate 242, glutamate 285, and aspartate 312. (2R)-2-phosphoglycerate contacts are provided by lysine 337, arginine 366, serine 367, and lysine 388. Lysine 337 serves as the catalytic Proton acceptor.

It belongs to the enolase family. As to quaternary structure, component of the RNA degradosome, a multiprotein complex involved in RNA processing and mRNA degradation. It depends on Mg(2+) as a cofactor.

It localises to the cytoplasm. It is found in the secreted. The protein localises to the cell surface. The catalysed reaction is (2R)-2-phosphoglycerate = phosphoenolpyruvate + H2O. The protein operates within carbohydrate degradation; glycolysis; pyruvate from D-glyceraldehyde 3-phosphate: step 4/5. In terms of biological role, catalyzes the reversible conversion of 2-phosphoglycerate (2-PG) into phosphoenolpyruvate (PEP). It is essential for the degradation of carbohydrates via glycolysis. The sequence is that of Enolase from Halorhodospira halophila (strain DSM 244 / SL1) (Ectothiorhodospira halophila (strain DSM 244 / SL1)).